The chain runs to 349 residues: Small ribosomal subunit protein uS2 (349 aa).

The protein belongs to the universal ribosomal protein uS2 family.

The chain is Small ribosomal subunit protein uS2 from Methylobacterium nodulans (strain LMG 21967 / CNCM I-2342 / ORS 2060).